The sequence spans 457 residues: Argininosuccinate lyase (457 aa).

This sequence belongs to the lyase 1 family. Argininosuccinate lyase subfamily.

The protein localises to the cytoplasm. The catalysed reaction is 2-(N(omega)-L-arginino)succinate = fumarate + L-arginine. The protein operates within amino-acid biosynthesis; L-arginine biosynthesis; L-arginine from L-ornithine and carbamoyl phosphate: step 3/3. The sequence is that of Argininosuccinate lyase from Pectobacterium carotovorum subsp. carotovorum (strain PC1).